A 93-amino-acid chain; its full sequence is Large ribosomal subunit protein bL31B (93 aa).

It belongs to the bacterial ribosomal protein bL31 family. Type B subfamily. In terms of assembly, part of the 50S ribosomal subunit.

This Pseudomonas syringae pv. syringae (strain B728a) protein is Large ribosomal subunit protein bL31B.